The chain runs to 440 residues: T-box transcription factor T homolog 2 (440 aa).

The segment at residues 44 to 215 is a DNA-binding region (T-box); the sequence is LWEKFKSLTN…HNPFAKAFLD (172 aa). 2 disordered regions span residues 282 to 303 and 393 to 440; these read APYP…DTAA and TTAS…MPSM. Residues 409 to 440 show a composition bias toward polar residues; it reads STDSGYGHSTTPPAPQTRITSNNWSPMTMPSM.

Mesoderm and notochord.

It is found in the nucleus. Functionally, involved in the transcriptional regulation of genes required for mesoderm formation and differentiation. The sequence is that of T-box transcription factor T homolog 2 from Branchiostoma floridae (Florida lancelet).